We begin with the raw amino-acid sequence, 338 residues long: 1-aminocyclopropane-1-carboxylate deaminase (338 aa).

K51 bears the N6-(pyridoxal phosphate)lysine mark. S78 acts as the Nucleophile in catalysis.

Belongs to the ACC deaminase/D-cysteine desulfhydrase family. Homotrimer. Pyridoxal 5'-phosphate serves as cofactor.

The enzyme catalyses 1-aminocyclopropane-1-carboxylate + H2O = 2-oxobutanoate + NH4(+). In terms of biological role, catalyzes a cyclopropane ring-opening reaction, the irreversible conversion of 1-aminocyclopropane-1-carboxylate (ACC) to ammonia and alpha-ketobutyrate. Allows growth on ACC as a nitrogen source. The chain is 1-aminocyclopropane-1-carboxylate deaminase from Burkholderia orbicola (strain MC0-3).